The sequence spans 287 residues: NH(3)-dependent NAD(+) synthetase (287 aa).

ATP is bound at residue 53 to 60 (GISGGQDS). A Mg(2+)-binding site is contributed by D59. Deamido-NAD(+) is bound at residue R146. Residue T166 coordinates ATP. E171 serves as a coordination point for Mg(2+). 2 residues coordinate deamido-NAD(+): K179 and D186. ATP-binding residues include K195 and T217. 266 to 267 (HK) contacts deamido-NAD(+).

This sequence belongs to the NAD synthetase family. In terms of assembly, homodimer.

The enzyme catalyses deamido-NAD(+) + NH4(+) + ATP = AMP + diphosphate + NAD(+) + H(+). It participates in cofactor biosynthesis; NAD(+) biosynthesis; NAD(+) from deamido-NAD(+) (ammonia route): step 1/1. In terms of biological role, catalyzes the ATP-dependent amidation of deamido-NAD to form NAD. Uses ammonia as a nitrogen source. This Deinococcus radiodurans (strain ATCC 13939 / DSM 20539 / JCM 16871 / CCUG 27074 / LMG 4051 / NBRC 15346 / NCIMB 9279 / VKM B-1422 / R1) protein is NH(3)-dependent NAD(+) synthetase.